A 121-amino-acid polypeptide reads, in one-letter code: UPF0145 protein SGR_4080 (121 aa).

It belongs to the UPF0145 family.

The chain is UPF0145 protein SGR_4080 from Streptomyces griseus subsp. griseus (strain JCM 4626 / CBS 651.72 / NBRC 13350 / KCC S-0626 / ISP 5235).